The chain runs to 341 residues: Methionine import ATP-binding protein MetN (341 aa).

Residues 2 to 237 form the ABC transporter domain; it reads IELCGLKKSF…PESLARKMLY (236 aa). Residue 34-41 coordinates ATP; the sequence is GKSGAGKS.

It belongs to the ABC transporter superfamily. Methionine importer (TC 3.A.1.24) family. In terms of assembly, the complex is composed of two ATP-binding proteins (MetN), two transmembrane proteins (MetI) and a solute-binding protein (MetQ).

Its subcellular location is the cell inner membrane. The catalysed reaction is L-methionine(out) + ATP + H2O = L-methionine(in) + ADP + phosphate + H(+). It catalyses the reaction D-methionine(out) + ATP + H2O = D-methionine(in) + ADP + phosphate + H(+). Part of the ABC transporter complex MetNIQ involved in methionine import. Responsible for energy coupling to the transport system. The protein is Methionine import ATP-binding protein MetN of Legionella pneumophila (strain Lens).